Reading from the N-terminus, the 435-residue chain is GTPase Der (435 aa).

2 EngA-type G domains span residues 4–167 and 175–350; these read KIVA…SKND and TKIA…QSLS. GTP is bound by residues 10-17, 57-61, 119-122, 181-188, 228-232, and 293-296; these read GKPNVGKS, DTGGI, NKYD, DTAGI, and NKWD. Residues 351–435 form the KH-like domain; that stretch reads VKVKTYVLNE…PINLIFRERK (85 aa).

This sequence belongs to the TRAFAC class TrmE-Era-EngA-EngB-Septin-like GTPase superfamily. EngA (Der) GTPase family. In terms of assembly, associates with the 50S ribosomal subunit.

Functionally, GTPase that plays an essential role in the late steps of ribosome biogenesis. The protein is GTPase Der of Mycoplasma capricolum subsp. capricolum (strain California kid / ATCC 27343 / NCTC 10154).